The following is a 216-amino-acid chain: Large ribosomal subunit protein eL15 (216 aa).

This sequence belongs to the eukaryotic ribosomal protein eL15 family.

The protein is Large ribosomal subunit protein eL15 of Metallosphaera sedula (strain ATCC 51363 / DSM 5348 / JCM 9185 / NBRC 15509 / TH2).